The following is a 548-amino-acid chain: Membrane protein insertase YidC (548 aa).

Residues N6 to D26 form a helical membrane-spanning segment. Positions N28–S55 are disordered. A compositionally biased stretch (low complexity) spans Q30–Q50. A run of 4 helical transmembrane segments spans residues F350–Y370, L420–L440, L458–I478, and P499–V519.

It belongs to the OXA1/ALB3/YidC family. Type 1 subfamily. As to quaternary structure, interacts with the Sec translocase complex via SecD. Specifically interacts with transmembrane segments of nascent integral membrane proteins during membrane integration.

The protein resides in the cell inner membrane. Required for the insertion and/or proper folding and/or complex formation of integral membrane proteins into the membrane. Involved in integration of membrane proteins that insert both dependently and independently of the Sec translocase complex, as well as at least some lipoproteins. Aids folding of multispanning membrane proteins. The sequence is that of Membrane protein insertase YidC from Shigella boydii serotype 18 (strain CDC 3083-94 / BS512).